Consider the following 99-residue polypeptide: Large ribosomal subunit protein uL23 (99 aa).

The protein belongs to the universal ribosomal protein uL23 family. As to quaternary structure, part of the 50S ribosomal subunit. Contacts protein L29, and trigger factor when it is bound to the ribosome.

Functionally, one of the early assembly proteins it binds 23S rRNA. One of the proteins that surrounds the polypeptide exit tunnel on the outside of the ribosome. Forms the main docking site for trigger factor binding to the ribosome. This Alkalilimnicola ehrlichii (strain ATCC BAA-1101 / DSM 17681 / MLHE-1) protein is Large ribosomal subunit protein uL23.